The sequence spans 81 residues: MKSDIHPTYEETTVVCGCGNTFQTRSTKQGGRIVAEVCSQCHPFYTGKQKILDSGGRVARFERRYGKRKAGADKDQAAADK.

Residues C16, C18, C38, and C41 each contribute to the Zn(2+) site.

The protein belongs to the bacterial ribosomal protein bL31 family. Type A subfamily. Part of the 50S ribosomal subunit. Zn(2+) is required as a cofactor.

Its function is as follows. Binds the 23S rRNA. The protein is Large ribosomal subunit protein bL31 of Mycobacterium marinum (strain ATCC BAA-535 / M).